The primary structure comprises 348 residues: Mannonate dehydratase (348 aa).

This sequence belongs to the mannonate dehydratase family. Fe(2+) serves as cofactor. Mn(2+) is required as a cofactor.

It catalyses the reaction D-mannonate = 2-dehydro-3-deoxy-D-gluconate + H2O. It functions in the pathway carbohydrate metabolism; pentose and glucuronate interconversion. In terms of biological role, catalyzes the dehydration of D-mannonate. In Streptococcus agalactiae serotype III (strain NEM316), this protein is Mannonate dehydratase.